Here is a 457-residue protein sequence, read N- to C-terminus: MEKKTRLFGTDGIRGTANQYPMTPDMVVKIGQAIGYLLRKEAEEKSSSVRKVVIGKDTRLSGYMIEQALASGLNSMGVFVQLVGPLPTPGIGYLTRTMRAAAGIVISASHNPFHDNGIKVFGSDGFKISEEMEREIERLVLEEDLTPLLPPSKEIGRTRRIEDSQGRYIVYVKGTFPLEYTLDGMRIVLDTANGASYKVAPSIFQELGAEVIQLGDDPNGTNINDKVGALYPQKLAESVLHYRADVGISLDGDADRVIMVDEKGEIVNGDRILAICALHMKERGLLKGDTLVATQMSNFGLEKRMNEAGIKLVKTGVGDKYVVEEMRKHGYNLGGEQSGHIIFLDHTTTGDGCIAALSVLAVMKQTGKKMSDLNHVFEDVPQILINCRVKRRAELSELAGYNDMIRNIEKKLAGNGRVFVRFSGTEPVIRVLVEGTEKAQITQFAEEIASFLEKELS.

S109 functions as the Phosphoserine intermediate in the catalytic mechanism. S109, D251, D253, and D255 together coordinate Mg(2+). Position 109 is a phosphoserine (S109).

It belongs to the phosphohexose mutase family. Requires Mg(2+) as cofactor. Activated by phosphorylation.

It catalyses the reaction alpha-D-glucosamine 1-phosphate = D-glucosamine 6-phosphate. Its function is as follows. Catalyzes the conversion of glucosamine-6-phosphate to glucosamine-1-phosphate. The protein is Phosphoglucosamine mutase of Bdellovibrio bacteriovorus (strain ATCC 15356 / DSM 50701 / NCIMB 9529 / HD100).